The following is a 1248-amino-acid chain: ATP-dependent helicase/nuclease subunit A (1248 aa).

Residues 4–480 (TKWTKEQYAA…ILLFKNFRSR (477 aa)) form the UvrD-like helicase ATP-binding domain. ATP is bound at residue 25-32 (AAAGAGKT). The 298-residue stretch at 523–820 (ETVVGGAIEL…RLMSIHKSKG (298 aa)) folds into the UvrD-like helicase C-terminal domain.

It belongs to the helicase family. AddA subfamily. Heterodimer of AddA and AddB/RexB. It depends on Mg(2+) as a cofactor.

The catalysed reaction is Couples ATP hydrolysis with the unwinding of duplex DNA by translocating in the 3'-5' direction.. It catalyses the reaction ATP + H2O = ADP + phosphate + H(+). In terms of biological role, the heterodimer acts as both an ATP-dependent DNA helicase and an ATP-dependent, dual-direction single-stranded exonuclease. Recognizes the chi site generating a DNA molecule suitable for the initiation of homologous recombination. The AddA nuclease domain is required for chi fragment generation; this subunit has the helicase and 3' -&gt; 5' nuclease activities. The chain is ATP-dependent helicase/nuclease subunit A from Ruminiclostridium cellulolyticum (strain ATCC 35319 / DSM 5812 / JCM 6584 / H10) (Clostridium cellulolyticum).